The primary structure comprises 64 residues: Beta-insect excitatory toxin OdTx12 (64 aa).

An LCN-type CS-alpha/beta domain is found at 1 to 59; it reads QSTGGKAPECLLSNYCNNECTKVHYADKGYCCLLSCYCFGLSDDKKVLEISDSRKKYCD. Cystine bridges form between Cys-10/Cys-31, Cys-16/Cys-36, Cys-20/Cys-38, and Cys-32/Cys-58.

Belongs to the long (4 C-C) scorpion toxin superfamily. Sodium channel inhibitor family. Beta subfamily. As to expression, expressed by the venom gland.

The protein localises to the secreted. Its function is as follows. Excitatory insect beta-toxins induce a spastic paralysis. They bind voltage-independently at site-4 of sodium channels (Nav) and shift the voltage of activation toward more negative potentials thereby affecting sodium channel activation and promoting spontaneous and repetitive firing. In vivo, this recombinant protein is lethal to Locusta migratoria larvae after injection, but has no significant effect when orally administered. Is not toxic to mice after intracerebroventricular injection. This is Beta-insect excitatory toxin OdTx12 from Odontobuthus doriae (Yellow Iranian scorpion).